The following is a 404-amino-acid chain: MNNSRMSSVSTQKTTGRSALGTKSALAAIIATTMMVSVASAASLQTTKATEAASTGWATQSGGTTGGAKASSSKIYAVKSISEFKAALNGTDSSPKIIQVTGAIDISGGKAYTSFDDQKARSQISIPSNTTIIGIGNKGKFTNGSLVVKGVSNVILRNLYIETPVDVAPHYEEGDGWNAEWDAVVIDSTDHVWVDHVTISDGSLTDDKYTTKNGEKYVQHDGSLDIKRGSDYVTVSNSRFELHDKTILIGHSDNNGSQDAGKLRVTFHNNLFDRVGERTPRVRFGSVHAYNNVYVGDVNHKAYRYQYSFGIGTSGSLLSESNAFTIDNMKKISGRDKECSVVKAFNGKIFSDKGSIINGASYNLNGCGFGFSAYSAKIPYKYSAQTITTSLANSISSNAGYGKL.

The first 41 residues, 1 to 41 (MNNSRMSSVSTQKTTGRSALGTKSALAAIIATTMMVSVASA), serve as a signal peptide directing secretion. Residues Asp182 and Asp225 each coordinate Ca(2+). Residue Arg278 is part of the active site.

It belongs to the polysaccharide lyase 1 family. PLBC subfamily. Ca(2+) serves as cofactor.

The protein resides in the secreted. The enzyme catalyses Eliminative cleavage of (1-&gt;4)-alpha-D-galacturonan to give oligosaccharides with 4-deoxy-alpha-D-galact-4-enuronosyl groups at their non-reducing ends.. Its pathway is glycan metabolism; pectin degradation; 2-dehydro-3-deoxy-D-gluconate from pectin: step 2/5. Functionally, involved in maceration and soft-rotting of plant tissue. Pectate lyases have been implicated as pathogenicity factors which induce maceration or rotting of plant tissue. PelE is sufficient to induce these effects under laboratory conditions. The chain is Pectate lyase E (pelE) from Dickeya dadantii (strain 3937) (Erwinia chrysanthemi (strain 3937)).